The primary structure comprises 155 residues: Large ribosomal subunit protein eL24 (155 aa).

Positions 87 to 155 (LELIKERRSQ…SFQKVKATSR (69 aa)) are disordered. The segment covering 89 to 129 (LIKERRSQKPSDRKAARDSKLAKDKEAKKAAKAARKAEKAK) has biased composition (basic and acidic residues). Over residues 130 to 143 (AVASGASVVSKQQA) the composition is skewed to low complexity.

The protein belongs to the eukaryotic ribosomal protein eL24 family. In terms of assembly, component of the large ribosomal subunit. Mature ribosomes consist of a small (40S) and a large (60S) subunit. The 40S subunit contains about 32 different proteins and 1 molecule of RNA (18S). The 60S subunit contains 45 different proteins and 3 molecules of RNA (25S, 5.8S and 5S).

It localises to the cytoplasm. Functionally, component of the ribosome, a large ribonucleoprotein complex responsible for the synthesis of proteins in the cell. The small ribosomal subunit (SSU) binds messenger RNAs (mRNAs) and translates the encoded message by selecting cognate aminoacyl-transfer RNA (tRNA) molecules. The large subunit (LSU) contains the ribosomal catalytic site termed the peptidyl transferase center (PTC), which catalyzes the formation of peptide bonds, thereby polymerizing the amino acids delivered by tRNAs into a polypeptide chain. The nascent polypeptides leave the ribosome through a tunnel in the LSU and interact with protein factors that function in enzymatic processing, targeting, and the membrane insertion of nascent chains at the exit of the ribosomal tunnel. This chain is Large ribosomal subunit protein eL24, found in Candida albicans (strain SC5314 / ATCC MYA-2876) (Yeast).